The following is a 148-amino-acid chain: Large ribosomal subunit protein uL16 (148 aa).

This sequence belongs to the universal ribosomal protein uL16 family. As to quaternary structure, part of the 50S ribosomal subunit.

Functionally, binds 23S rRNA and is also seen to make contacts with the A and possibly P site tRNAs. This is Large ribosomal subunit protein uL16 from Gloeobacter violaceus (strain ATCC 29082 / PCC 7421).